Consider the following 500-residue polypeptide: Aspartyl/glutamyl-tRNA(Asn/Gln) amidotransferase subunit B (500 aa).

The protein belongs to the GatB/GatE family. GatB subfamily. Heterotrimer of A, B and C subunits.

It catalyses the reaction L-glutamyl-tRNA(Gln) + L-glutamine + ATP + H2O = L-glutaminyl-tRNA(Gln) + L-glutamate + ADP + phosphate + H(+). The enzyme catalyses L-aspartyl-tRNA(Asn) + L-glutamine + ATP + H2O = L-asparaginyl-tRNA(Asn) + L-glutamate + ADP + phosphate + 2 H(+). In terms of biological role, allows the formation of correctly charged Asn-tRNA(Asn) or Gln-tRNA(Gln) through the transamidation of misacylated Asp-tRNA(Asn) or Glu-tRNA(Gln) in organisms which lack either or both of asparaginyl-tRNA or glutaminyl-tRNA synthetases. The reaction takes place in the presence of glutamine and ATP through an activated phospho-Asp-tRNA(Asn) or phospho-Glu-tRNA(Gln). The protein is Aspartyl/glutamyl-tRNA(Asn/Gln) amidotransferase subunit B of Brucella melitensis biotype 2 (strain ATCC 23457).